The following is a 627-amino-acid chain: uncharacterized protein (627 aa).

Disordered stretches follow at residues 141–187 (LRYP…TPPS) and 490–510 (ENENTNGSANNSTYTNGGPRT). The span at 491 to 510 (NENTNGSANNSTYTNGGPRT) shows a compositional bias: polar residues. Residue Ser-559 is modified to Phosphoserine.

This is an uncharacterized protein from Saccharomyces cerevisiae (strain ATCC 204508 / S288c) (Baker's yeast).